A 67-amino-acid chain; its full sequence is Sperm protamine P1 (67 aa).

Residues methionine 1 to lysine 67 form a disordered region. 2 stretches are compositionally biased toward basic residues: residues serine 7–valine 25 and arginine 34–lysine 67.

Belongs to the protamine P1 family. In terms of tissue distribution, testis.

It is found in the nucleus. The protein localises to the chromosome. Protamines substitute for histones in the chromatin of sperm during the haploid phase of spermatogenesis. They compact sperm DNA into a highly condensed, stable and inactive complex. In Isoodon macrourus (Short-nosed bandicoot), this protein is Sperm protamine P1 (PRM1).